The primary structure comprises 383 residues: Paralemmin-1 (383 aa).

Met-1 bears the N-acetylmethionine mark. The stretch at 5-102 (ATDTASQQER…KEIDVLEFGE (98 aa)) forms a coiled coil. Disordered regions lie at residues 51-163 (RERW…GSTM), 242-295 (TLSE…GQEP), and 334-375 (ATPR…MKKP). Basic and acidic residues predominate over residues 69-96 (DMRKQMQEDEQKARGLEESITRLEKEID). Polar residues-rich tracts occupy residues 109 to 124 (KENS…QSAS) and 133 to 143 (ETLVNAQQTPL). Ser-116, Ser-122, and Ser-124 each carry phosphoserine. Residues Thr-141, Thr-145, and Thr-153 each carry the phosphothreonine modification. Ser-157 and Ser-161 each carry phosphoserine. Phosphothreonine is present on Thr-242. The residue at position 244 (Ser-244) is a Phosphoserine. A compositionally biased stretch (basic and acidic residues) spans 257–273 (GLAEDVTRTTPSRREIT). Over residues 285–295 (GPPGIQPGQEP) the composition is skewed to low complexity. Residue Ser-345 is modified to Phosphoserine. Positions 357-367 (QTGPTTTPSDT) are enriched in polar residues. Thr-361, Thr-362, and Thr-363 each carry phosphothreonine. A Phosphoserine modification is found at Ser-365. Thr-367 bears the Phosphothreonine mark. 2 S-palmitoyl cysteine lipidation sites follow: Cys-377 and Cys-379. Cys-380 bears the Cysteine methyl ester mark. A lipid anchor (S-farnesyl cysteine) is attached at Cys-380. A propeptide spans 381 to 383 (SVM) (removed in mature form).

It belongs to the paralemmin family. Interacts with dopamine receptor DRD3. As to expression, expression is highest in brain, intermediate in adrenal gland and kidney, and much lower or undetectable in other tissues. Isoform 1 is the predominant isoform in most tissues except brain and kidney where isoform 2 predominates.

The protein localises to the cell membrane. It localises to the cell projection. It is found in the filopodium membrane. Its subcellular location is the axon. The protein resides in the dendrite. The protein localises to the dendritic spine. It localises to the basolateral cell membrane. It is found in the apicolateral cell membrane. Functionally, involved in plasma membrane dynamics and cell process formation. Isoform 1 and isoform 2 are necessary for axonal and dendritic filopodia induction, for dendritic spine maturation and synapse formation in a palmitoylation-dependent manner. The protein is Paralemmin-1 (Palm) of Mus musculus (Mouse).